Here is a 346-residue protein sequence, read N- to C-terminus: DNA primase small subunit PriS (346 aa).

Catalysis depends on residues Asp-97, Asp-99, and Asp-278.

The protein belongs to the eukaryotic-type primase small subunit family. In terms of assembly, heterodimer of a small subunit (PriS) and a large subunit (PriL). It depends on Mg(2+) as a cofactor. Requires Mn(2+) as cofactor.

Catalytic subunit of DNA primase, an RNA polymerase that catalyzes the synthesis of short RNA molecules used as primers for DNA polymerase during DNA replication. The small subunit contains the primase catalytic core and has DNA synthesis activity on its own. Binding to the large subunit stabilizes and modulates the activity, increasing the rate of DNA synthesis while decreasing the length of the DNA fragments, and conferring RNA synthesis capability. The DNA polymerase activity may enable DNA primase to also catalyze primer extension after primer synthesis. May also play a role in DNA repair. This Thermococcus onnurineus (strain NA1) protein is DNA primase small subunit PriS.